The primary structure comprises 398 residues: Potassium channel subfamily K member 4 (398 aa).

At 1-3 (MRS) the chain is on the cytoplasmic side. Residues 4-24 (TTLLALLALVLLYLVSGALVF) traverse the membrane as a helical segment. Residues 25–88 (QALEQPHEQQ…WTNSSNHSSA (64 aa)) lie on the Extracellular side of the membrane. N-linked (GlcNAc...) asparagine glycosylation is found at N81 and N84. Positions 89-103 (WNLGSAFFFSGTIIT) form an intramembrane region, helical. K(+) is bound by residues T104, I105, G106, and Y107. The interval 104 to 109 (TIGYGN) is selectivity filter 1. Residues 104-110 (TIGYGNI) lie within the membrane without spanning it. The Extracellular segment spans residues 111-118 (VLHTDAGR). Residues 119 to 151 (LFCIFYALVGIPLFGMLLAGVGDRLGSSLRRGI) form a helical membrane-spanning segment. Residues 152-173 (GHIEAIFLKWHVPPGLVRSLSA) lie on the Cytoplasmic side of the membrane. The helical transmembrane segment at 174 to 195 (VLFLLIGCLLFVLTPTFVFSYM) threads the bilayer. Over 196–200 (ESWSK) the chain is Extracellular. Positions 201 to 214 (LEAIYFVIVTLTTV) form an intramembrane region, helical. K(+) contacts are provided by T213, V214, G215, and F216. Positions 213–218 (TVGFGD) are selectivity filter 2. Residues 215–220 (GFGDYV) lie within the membrane without spanning it. Topologically, residues 221–234 (PGDGTGQNSPAYQP) are extracellular. Residues 235-261 (LVWFWILFGLAYFASVLTTIGNWLRAV) traverse the membrane as a helical segment. Residues 262 to 398 (SRRTRAEMGG…GRLRDKAVPV (137 aa)) are Cytoplasmic-facing. Residues 282 to 292 (TVTARVTQRTG) show a composition bias toward polar residues. The segment at 282 to 398 (TVTARVTQRT…GRLRDKAVPV (117 aa)) is disordered. Basic residues predominate over residues 370 to 389 (PRGRRRPNPSKKPSRPRGPG).

It belongs to the two pore domain potassium channel (TC 1.A.1.8) family. As to quaternary structure, homodimer; disulfide-linked. Forms heterodimers with other 2-pore domain K(+) channel subunits, such as KCNK2 and KCNK10. In terms of processing, N-glycosylated. Expressed in brain, spinal cord and eye. Not detected in heart, skeletal muscle, liver, lungs, kidney and testis.

The protein localises to the cell membrane. It is found in the cell projection. The protein resides in the axon. The enzyme catalyses K(+)(in) = K(+)(out). It catalyses the reaction Rb(+)(in) = Rb(+)(out). It carries out the reaction Cs(+)(in) = Cs(+)(out). With respect to regulation, activated by arachidonic acid and other polyunsaturated fatty acids. Not affected by volatile general anesthetics such as chloroform, diethyl ether, halothane and isoflurane. Activated at intracellular and extracellular basic pHs. K(+) channel that conducts voltage-dependent outward rectifying currents upon membrane depolarization. Voltage sensing is coupled to K(+) electrochemical gradient in an 'ion flux gating' mode where outward but not inward ion flow opens the gate. Converts to voltage-independent 'leak' conductance mode upon stimulation by various stimuli including mechanical membrane stretch, basic pH, temperature and lipids. Homo- and heterodimerizes to form functional channels with distinct regulatory and gating properties. At trigeminal A-beta afferent nerves, the heterodimer of KCNK2/TREK-1 and KCNK4/TRAAK is mostly coexpressed at nodes of Ranvier where it conducts voltage-independent mechanosensitive and thermosensitive currents, allowing rapid action potential repolarization, high speed and high frequence saltatory conduction on myelinated nerves to ensure prompt sensory responses. Permeable to other monovalent cations such as Rb(+) and Cs(+). This Mus musculus (Mouse) protein is Potassium channel subfamily K member 4.